A 263-amino-acid chain; its full sequence is MSTPSPQLLVAAAQQTLGMGKRKCPPRATCLHLAGEVLAVARGLKPAVLYDCNSAGVLALQSYLEELQGLGFLEPGLHILEIGENNFIVSPEYACQHLEQTLLGTVAFVDVSRSQPHPSVRSVDQLPDLKSLIADVITRFRGLKKDVSQGVSYTRLHSSDWNLCTVFGILLGYPVSYTFDLNREDDNCLTMTPLRVFTARISWLPGQPSILLYSFSVPESLFPALKNFLSAWEKELRTRFRAQNAFADLSISSEVVTLPAVAL.

It belongs to the UPF0739 family.

The polypeptide is UPF0739 protein C1orf74 homolog (Mus musculus (Mouse)).